A 2566-amino-acid polypeptide reads, in one-letter code: Highly reducing polyketide synthase verA (2566 aa).

The 438-residue stretch at proline 3–serine 440 folds into the Ketosynthase family 3 (KS3) domain. Residues valine 35–asparagine 61 are disordered. Over residues phenylalanine 44–proline 54 the composition is skewed to basic and acidic residues. Active-site for beta-ketoacyl synthase activity residues include cysteine 176, histidine 316, and histidine 360. A malonyl-CoA:ACP transacylase (MAT) domain region spans residues isoleucine 554–glycine 880. Serine 648 serves as the catalytic For malonyltransferase activity. The tract at residues histidine 950 to proline 1081 is N-terminal hotdog fold. Residues histidine 950–proline 1246 form a dehydratase (DH) domain region. Residues histidine 950–glutamine 1250 form the PKS/mFAS DH domain. Histidine 982 (proton acceptor; for dehydratase activity) is an active-site residue. Residues alanine 1096–glutamine 1250 form a C-terminal hotdog fold region. The active-site Proton donor; for dehydratase activity is aspartate 1156. Positions aspartate 1386 to threonine 1581 are methyltransferase (CMet) domain. Positions lysine 2127 to isoleucine 2294 are ketoreductase (KR) domain. In terms of domain architecture, Carrier spans glutamate 2411–leucine 2489. Serine 2449 is modified (O-(pantetheine 4'-phosphoryl)serine). Residues lysine 2505–phenylalanine 2540 form a disordered region. The span at serine 2518–serine 2527 shows a compositional bias: low complexity.

Pantetheine 4'-phosphate serves as cofactor.

Its pathway is secondary metabolite biosynthesis; terpenoid biosynthesis. It participates in mycotoxin biosynthesis. Its function is as follows. Highly reducing polyketide synthase (HR-PKS); part of the gene cluster that mediates the biosynthesis of the neurotoxin verrucosidin, a methylated alpha-pyrone polyketide that inhibits oxidative phosphorylation in mitochondria and thereby causes neurological diseases. The carbon backbone of verrucosidin is synthesized by the HR-PKS verA, and further modified by the other verrucodidin cluster enzymes. The sequence is that of Highly reducing polyketide synthase verA from Penicillium polonicum.